We begin with the raw amino-acid sequence, 135 residues long: ATP synthase epsilon chain (135 aa).

It belongs to the ATPase epsilon chain family. F-type ATPases have 2 components, CF(1) - the catalytic core - and CF(0) - the membrane proton channel. CF(1) has five subunits: alpha(3), beta(3), gamma(1), delta(1), epsilon(1). CF(0) has three main subunits: a, b and c.

The protein resides in the cell inner membrane. Functionally, produces ATP from ADP in the presence of a proton gradient across the membrane. This Rhodopseudomonas palustris (strain HaA2) protein is ATP synthase epsilon chain.